A 37-amino-acid polypeptide reads, in one-letter code: Large ribosomal subunit protein bL36 (37 aa).

Belongs to the bacterial ribosomal protein bL36 family.

The chain is Large ribosomal subunit protein bL36 from Vibrio atlanticus (strain LGP32) (Vibrio splendidus (strain Mel32)).